A 238-amino-acid chain; its full sequence is Enolase-phosphatase E1 (238 aa).

Belongs to the HAD-like hydrolase superfamily. MasA/MtnC family. As to quaternary structure, monomer. It depends on Mg(2+) as a cofactor.

The catalysed reaction is 5-methylsulfanyl-2,3-dioxopentyl phosphate + H2O = 1,2-dihydroxy-5-(methylsulfanyl)pent-1-en-3-one + phosphate. Its pathway is amino-acid biosynthesis; L-methionine biosynthesis via salvage pathway; L-methionine from S-methyl-5-thio-alpha-D-ribose 1-phosphate: step 3/6. It participates in amino-acid biosynthesis; L-methionine biosynthesis via salvage pathway; L-methionine from S-methyl-5-thio-alpha-D-ribose 1-phosphate: step 4/6. In terms of biological role, bifunctional enzyme that catalyzes the enolization of 2,3-diketo-5-methylthiopentyl-1-phosphate (DK-MTP-1-P) into the intermediate 2-hydroxy-3-keto-5-methylthiopentenyl-1-phosphate (HK-MTPenyl-1-P), which is then dephosphorylated to form the acireductone 1,2-dihydroxy-3-keto-5-methylthiopentene (DHK-MTPene). The chain is Enolase-phosphatase E1 from Synechococcus elongatus (strain ATCC 33912 / PCC 7942 / FACHB-805) (Anacystis nidulans R2).